We begin with the raw amino-acid sequence, 534 residues long: EH domain-containing protein 1 (534 aa).

Methionine 1 bears the N-acetylmethionine mark. One can recognise a Dynamin-type G domain in the interval 55–286 (FDNKPMVLLV…DLFKDIQSLP (232 aa)). The segment at 65 to 72 (GQYSTGKT) is G1 motif. 65 to 72 (GQYSTGKT) serves as a coordination point for ATP. Residues 91-92 (EP) form a G2 motif region. The segment at 153–156 (DTPG) is G3 motif. A coiled-coil region spans residues 198 to 227 (DEFSEVIKALKNHEDKIRVVLNKADQIETQ). The G4 motif stretch occupies residues 219–222 (NKAD). Lysine 220 serves as a coordination point for ATP. A region of interest (G5 motif) is located at residue isoleucine 243. An ATP-binding site is contributed by tryptophan 258. Phosphoserine is present on residues serine 355 and serine 456. Positions 444 to 532 (DKPTYDEIFY…PHLVPPSKRR (89 aa)) constitute an EH domain. In terms of domain architecture, EF-hand spans 476–511 (LPNTVLGKIWKLADVDKDGLLDDEEFALANHLIKVK). Aspartate 489, aspartate 491, aspartate 493, and glutamate 500 together coordinate Ca(2+).

It belongs to the TRAFAC class dynamin-like GTPase superfamily. Dynamin/Fzo/YdjA family. EHD subfamily. As to quaternary structure, homooligomer, and heterooligomer with EHD2, EHD3 and EHD4, ATP-binding is required for heterooligomerization. Interacts (via EH domain) with MICALL1 (via NPF1 motif); the interaction is direct and recruits EHD1 to membranes. Interacts with RAB35; the interaction is indirect through MICALL1 and recruits EHD1 to membranes. Interacts (via EH domain) with PACSIN2 (via NPF motifs); regulates localization to tubular recycling endosome membranes. Interacts with PACSIN1. Interacts with RAB8A. Interacts with FER1L5 (via second C2 domain). Interacts with MYOF. Interacts with ZFYVE20. Interacts (via EH domain) with RAB11FIP2.

It localises to the recycling endosome membrane. Its subcellular location is the early endosome membrane. The protein localises to the cell membrane. The protein resides in the cell projection. It is found in the cilium membrane. Its function is as follows. ATP- and membrane-binding protein that controls membrane reorganization/tubulation upon ATP hydrolysis. Acts in early endocytic membrane fusion and membrane trafficking of recycling endosomes. Recruited to endosomal membranes upon nerve growth factor stimulation, indirectly regulates neurite outgrowth. Plays a role in myoblast fusion. Involved in the unidirectional retrograde dendritic transport of endocytosed BACE1 and in efficient sorting of BACE1 to axons implicating a function in neuronal APP processing. Plays a role in the formation of the ciliary vesicle (CV), an early step in cilium biogenesis. Proposed to be required for the fusion of distal appendage vesicles (DAVs) to form the CV by recruiting SNARE complex component SNAP29. Is required for recruitment of transition zone proteins CEP290, RPGRIP1L, TMEM67 and B9D2, and of IFT20 following DAV reorganization before Rab8-dependent ciliary membrane extension. Required for the loss of CCP110 form the mother centriole essential for the maturation of the basal body during ciliogenesis. The polypeptide is EH domain-containing protein 1 (Pongo abelii (Sumatran orangutan)).